The chain runs to 558 residues: Dimethylaniline monooxygenase [N-oxide-forming] 4 (558 aa).

Residues 9–13 (GAGVS), E32, and 40–41 (LW) each bind FAD. Residues 60-61 (TN) and 195-198 (TGGD) each bind NADP(+). A helical transmembrane segment spans residues 517–537 (AWGAPVLLASLLLICKSSLFL).

The protein belongs to the FMO family. Requires FAD as cofactor. As to expression, liver.

The protein resides in the microsome membrane. Its subcellular location is the endoplasmic reticulum membrane. The catalysed reaction is N,N-dimethylaniline + NADPH + O2 + H(+) = N,N-dimethylaniline N-oxide + NADP(+) + H2O. In terms of biological role, this protein is involved in the oxidative metabolism of a variety of xenobiotics such as drugs and pesticides. This chain is Dimethylaniline monooxygenase [N-oxide-forming] 4 (FMO4), found in Homo sapiens (Human).